A 181-amino-acid chain; its full sequence is NAD(P)H-quinone oxidoreductase subunit I, chloroplastic (181 aa).

2 4Fe-4S ferredoxin-type domains span residues 55-84 (GRIH…VDWE) and 95-124 (KSYS…MTEE). [4Fe-4S] cluster is bound by residues Cys64, Cys67, Cys70, Cys74, Cys104, Cys107, Cys110, and Cys114.

This sequence belongs to the complex I 23 kDa subunit family. NDH is composed of at least 16 different subunits, 5 of which are encoded in the nucleus. [4Fe-4S] cluster is required as a cofactor.

Its subcellular location is the plastid. It is found in the chloroplast thylakoid membrane. The enzyme catalyses a plastoquinone + NADH + (n+1) H(+)(in) = a plastoquinol + NAD(+) + n H(+)(out). The catalysed reaction is a plastoquinone + NADPH + (n+1) H(+)(in) = a plastoquinol + NADP(+) + n H(+)(out). NDH shuttles electrons from NAD(P)H:plastoquinone, via FMN and iron-sulfur (Fe-S) centers, to quinones in the photosynthetic chain and possibly in a chloroplast respiratory chain. The immediate electron acceptor for the enzyme in this species is believed to be plastoquinone. Couples the redox reaction to proton translocation, and thus conserves the redox energy in a proton gradient. In Physcomitrium patens (Spreading-leaved earth moss), this protein is NAD(P)H-quinone oxidoreductase subunit I, chloroplastic.